Here is a 290-residue protein sequence, read N- to C-terminus: MAALQEKKSCSQRMEEFQRYCWNPDTGQMLGRTLSRWVWISLYYVAFYVVMTGIFALCIYTLMCTLDPYTPDYQDQLKSPGVTLRPDVYGEKGLDISYNVSDNRTWVDLVNILHNFLEGYSPTSQEDNINCTSEKYFFQDVFGAPNHTKFSCKFMADMLQNCSGLTDPNFGFAEGKPCFIIKMNRIVNFLPSNSTAPRADCTFLDQHKDDRPLQVEYYPPNGTFSLRYFPYYGKKAQPHYSNPLVAAKLLNVPRNTEVLIVCKILADYVTFDNPHDPYEGKVEFKLTIQQ.

The Cytoplasmic portion of the chain corresponds to 1–36 (MAALQEKKSCSQRMEEFQRYCWNPDTGQMLGRTLSR). A helical; Signal-anchor for type II membrane protein transmembrane segment spans residues 37-57 (WVWISLYYVAFYVVMTGIFAL). Residues 58-290 (CIYTLMCTLD…KVEFKLTIQQ (233 aa)) lie on the Extracellular side of the membrane. N-linked (GlcNAc...) asparagine glycosylation is found at Asn-99, Asn-103, Asn-130, Asn-146, and Asn-161. Cysteines 131 and 152 form a disulfide. Cys-162 and Cys-178 form a disulfide bridge. N-linked (GlcNAc...) asparagine glycosylation is found at Asn-193 and Asn-221. Positions 194–290 (STAPRADCTF…KVEFKLTIQQ (97 aa)) are immunoglobulin-like. A disulfide bond links Cys-201 and Cys-262.

This sequence belongs to the X(+)/potassium ATPases subunit beta family. In terms of assembly, the ATPase pump is composed of two subunits: alpha (catalytic) and beta (regulatory). Interacts with alpha subunit ATP12A; this interaction is required for the formation of a functionally active pump and targeting at the plasma membrane. Interacts (via N-terminus) with alpha subunit ATP4A (via the P-domain). N-glycosylation is necessary for assembly and functional expression of the pump at the plasma membrane.

The protein resides in the apical cell membrane. Its subcellular location is the cell membrane. Its function is as follows. The beta subunit of the gastric H(+)/K(+) ATPase pump which transports H(+) ions in exchange for K(+) ions across the apical membrane of parietal cells. Plays a structural and regulatory role in the assembly and membrane targeting of a functionally active pump. Within a transport cycle, the transfer of a H(+) ion across the membrane is coupled to ATP hydrolysis and is associated with a transient phosphorylation of the alpha subunit that shifts the pump conformation from inward-facing (E1) to outward-facing state (E2). Interacts with the phosphorylation domain of the alpha subunit and functions as a ratchet, stabilizing the lumenal-open E2 conformation and preventing the reverse reaction of the transport cycle. The chain is Potassium-transporting ATPase subunit beta (ATP4B) from Canis lupus familiaris (Dog).